Consider the following 787-residue polypeptide: Endonuclease MutS2 (787 aa).

331–338 serves as a coordination point for ATP; that stretch reads GPNTGGKT. The Smr domain occupies 711 to 786; that stretch reads IDVRGKTSDD…EQGVTVVELK (76 aa).

The protein belongs to the DNA mismatch repair MutS family. MutS2 subfamily. Homodimer. Binds to stalled ribosomes, contacting rRNA.

In terms of biological role, endonuclease that is involved in the suppression of homologous recombination and thus may have a key role in the control of bacterial genetic diversity. Functionally, acts as a ribosome collision sensor, splitting the ribosome into its 2 subunits. Detects stalled/collided 70S ribosomes which it binds and splits by an ATP-hydrolysis driven conformational change. Acts upstream of the ribosome quality control system (RQC), a ribosome-associated complex that mediates the extraction of incompletely synthesized nascent chains from stalled ribosomes and their subsequent degradation. Probably generates substrates for RQC. This chain is Endonuclease MutS2, found in Caldicellulosiruptor bescii (strain ATCC BAA-1888 / DSM 6725 / KCTC 15123 / Z-1320) (Anaerocellum thermophilum).